A 523-amino-acid chain; its full sequence is MSQQVIIFDTTLRDGEQALQASLSVKEKLQIALALERMGVDVMEVGFPVSSPGDFESVQTIARQVKNSRVCALARCVEKDIDVAAESLKVAEAFRIHTFIATSPMHIATKLRSTLDEVIERAIYMVKRARNYTDDVEFSCEDAGRTPIADLARVVEAAINAGATTINIPDTVGYTMPFEFAGIISGLYERVPNIDKAIISVHTHDDLGLAVGNSLAAVHAGARQVEGAMNGIGERAGNCSLEEVIMAIKVRKDILNVHTAINHQEIWRTSQLVSQICNMPIPANKAIVGSGAFAHSSGIHQDGVLKNRENYEIMTPESIGLNQIQLNLTSRSGRAAVKHRMDEMGYKESEYNLDNLYDAFLKLADKKGQVFDYDLEALAFIGKQQEEPEHFRLDYFSVQSGSNDIATAAVKLACGEEVKAEAANGNGPVDAVYQAINRITDYNVELVKYSLTAKGHGKDALGQVDIVANYNGRRFHGVGLATDIVESSAKAMVHVLNNIWRATEVEKELQRKAQHNENNKETV.

Residues 5–267 enclose the Pyruvate carboxyltransferase domain; it reads VIIFDTTLRD…HTAINHQEIW (263 aa). Mn(2+)-binding residues include Asp14, His202, His204, and Asn238. The segment at 392-523 is regulatory domain; sequence RLDYFSVQSG…QHNENNKETV (132 aa).

The protein belongs to the alpha-IPM synthase/homocitrate synthase family. LeuA type 1 subfamily. In terms of assembly, homodimer. The cofactor is Mn(2+).

It localises to the cytoplasm. The enzyme catalyses 3-methyl-2-oxobutanoate + acetyl-CoA + H2O = (2S)-2-isopropylmalate + CoA + H(+). Its pathway is amino-acid biosynthesis; L-leucine biosynthesis; L-leucine from 3-methyl-2-oxobutanoate: step 1/4. In terms of biological role, catalyzes the condensation of the acetyl group of acetyl-CoA with 3-methyl-2-oxobutanoate (2-ketoisovalerate) to form 3-carboxy-3-hydroxy-4-methylpentanoate (2-isopropylmalate). This is 2-isopropylmalate synthase from Escherichia coli O157:H7.